A 200-amino-acid polypeptide reads, in one-letter code: Holliday junction branch migration complex subunit RuvA (200 aa).

The interval Met-1–Ala-64 is domain I. Positions Glu-65–Ala-143 are domain II. The flexible linker stretch occupies residues Met-144 to Ala-154. Residues Ala-154 to Gly-200 are domain III.

This sequence belongs to the RuvA family. Homotetramer. Forms an RuvA(8)-RuvB(12)-Holliday junction (HJ) complex. HJ DNA is sandwiched between 2 RuvA tetramers; dsDNA enters through RuvA and exits via RuvB. An RuvB hexamer assembles on each DNA strand where it exits the tetramer. Each RuvB hexamer is contacted by two RuvA subunits (via domain III) on 2 adjacent RuvB subunits; this complex drives branch migration. In the full resolvosome a probable DNA-RuvA(4)-RuvB(12)-RuvC(2) complex forms which resolves the HJ.

It localises to the cytoplasm. Functionally, the RuvA-RuvB-RuvC complex processes Holliday junction (HJ) DNA during genetic recombination and DNA repair, while the RuvA-RuvB complex plays an important role in the rescue of blocked DNA replication forks via replication fork reversal (RFR). RuvA specifically binds to HJ cruciform DNA, conferring on it an open structure. The RuvB hexamer acts as an ATP-dependent pump, pulling dsDNA into and through the RuvAB complex. HJ branch migration allows RuvC to scan DNA until it finds its consensus sequence, where it cleaves and resolves the cruciform DNA. This chain is Holliday junction branch migration complex subunit RuvA, found in Erythrobacter litoralis (strain HTCC2594).